A 390-amino-acid chain; its full sequence is MKFVDEASILVVAGDGGNGCVSFRREKYIPKGGPDGGDGGDGGDVWMEADENLNTLIDYRFEKSFRAERGQNGASRDCTGKRGKDVTIKVPVGTRVIDQGTGETMGDMTKHGQRLLVAKGGWHGLGNTRFKSSVNRTPRQKTNGTPGDKRELLLELMLLADVGMLGMPNAGKSTFIRAVSAAKPKVADYPFTTLVPSLGVVRMDNEKSFVVADIPGLIEGAAEGAGLGIRFLKHLERCRVLLHLIDIDPIDGTDPVENARIIISELEKYSQDLAAKPRWLVFNKIDLLDKAEAEEKAKAIAEALGWEDKYYLISAASGLGVKDLCWDVMTFIIENPVVQDEEAKQPEKVEFMWDDYHRQQLEEIAEEDDEDWDDDWDEDDEEGVEFIYKR.

The Obg domain maps to 1–159 (MKFVDEASIL…RELLLELMLL (159 aa)). Positions 127-147 (NTRFKSSVNRTPRQKTNGTPG) are disordered. Residues 129–145 (RFKSSVNRTPRQKTNGT) are compositionally biased toward polar residues. The 174-residue stretch at 160 to 333 (ADVGMLGMPN…LCWDVMTFII (174 aa)) folds into the OBG-type G domain. GTP-binding positions include 166-173 (GMPNAGKS), 191-195 (FTTLV), 213-216 (DIPG), 283-286 (NKID), and 314-316 (SAA). Mg(2+)-binding residues include serine 173 and threonine 193.

This sequence belongs to the TRAFAC class OBG-HflX-like GTPase superfamily. OBG GTPase family. Monomer. Requires Mg(2+) as cofactor.

The protein localises to the cytoplasm. Its function is as follows. An essential GTPase which binds GTP, GDP and possibly (p)ppGpp with moderate affinity, with high nucleotide exchange rates and a fairly low GTP hydrolysis rate. Plays a role in control of the cell cycle, stress response, ribosome biogenesis and in those bacteria that undergo differentiation, in morphogenesis control. In Shigella dysenteriae serotype 1 (strain Sd197), this protein is GTPase Obg.